Reading from the N-terminus, the 311-residue chain is 4-hydroxy-tetrahydrodipicolinate synthase (311 aa).

T51 contacts pyruvate. Y140 functions as the Proton donor/acceptor in the catalytic mechanism. The active-site Schiff-base intermediate with substrate is the K168. I209 provides a ligand contact to pyruvate.

Belongs to the DapA family. In terms of assembly, homotetramer; dimer of dimers.

It is found in the cytoplasm. The catalysed reaction is L-aspartate 4-semialdehyde + pyruvate = (2S,4S)-4-hydroxy-2,3,4,5-tetrahydrodipicolinate + H2O + H(+). It participates in amino-acid biosynthesis; L-lysine biosynthesis via DAP pathway; (S)-tetrahydrodipicolinate from L-aspartate: step 3/4. Catalyzes the condensation of (S)-aspartate-beta-semialdehyde [(S)-ASA] and pyruvate to 4-hydroxy-tetrahydrodipicolinate (HTPA). This chain is 4-hydroxy-tetrahydrodipicolinate synthase, found in Streptococcus pneumoniae (strain ATCC 700669 / Spain 23F-1).